The following is a 213-amino-acid chain: Protein Tpen_0748 (213 aa).

An AMMECR1 domain is found at 7 to 207 (EEGALLVRLA…ETTPKGDVVE (201 aa)).

This chain is Protein Tpen_0748, found in Thermofilum pendens (strain DSM 2475 / Hrk 5).